The chain runs to 197 residues: Probable GTP-binding protein EngB (197 aa).

The EngB-type G domain occupies 2–186 (KVKEVIFAGR…KRDLKQYLLS (185 aa)). GTP is bound by residues 10–17 (GRSNVGKS), 35–39 (GTTIR), 52–55 (DLPG), 132–135 (NKMD), and 166–168 (VCA). Residues Ser17 and Thr37 each coordinate Mg(2+).

Belongs to the TRAFAC class TrmE-Era-EngA-EngB-Septin-like GTPase superfamily. EngB GTPase family. The cofactor is Mg(2+).

Necessary for normal cell division and for the maintenance of normal septation. The chain is Probable GTP-binding protein EngB from Archaeoglobus fulgidus (strain ATCC 49558 / DSM 4304 / JCM 9628 / NBRC 100126 / VC-16).